The sequence spans 398 residues: 4-hydroxy-3-methylbut-2-en-1-yl diphosphate synthase (ferredoxin) (398 aa).

[4Fe-4S] cluster is bound by residues Cys306, Cys309, Cys340, and Glu347.

It belongs to the IspG family. The cofactor is [4Fe-4S] cluster.

It carries out the reaction (2E)-4-hydroxy-3-methylbut-2-enyl diphosphate + 2 oxidized [2Fe-2S]-[ferredoxin] + H2O = 2-C-methyl-D-erythritol 2,4-cyclic diphosphate + 2 reduced [2Fe-2S]-[ferredoxin] + H(+). It functions in the pathway isoprenoid biosynthesis; isopentenyl diphosphate biosynthesis via DXP pathway; isopentenyl diphosphate from 1-deoxy-D-xylulose 5-phosphate: step 5/6. In terms of biological role, converts 2C-methyl-D-erythritol 2,4-cyclodiphosphate (ME-2,4cPP) into 1-hydroxy-2-methyl-2-(E)-butenyl 4-diphosphate. The sequence is that of 4-hydroxy-3-methylbut-2-en-1-yl diphosphate synthase (ferredoxin) from Parasynechococcus marenigrum (strain WH8102).